A 182-amino-acid polypeptide reads, in one-letter code: Neuropeptide CCHamide-1 (182 aa).

Residues 1–22 form the signal peptide; sequence MWYSKCSWTLVVLVALFALVTG. Cysteine 24 and cysteine 31 are oxidised to a cystine. A Histidine amide modification is found at histidine 35. Residues 39–182 constitute a propeptide that is removed on maturation; the sequence is SGGKAVIDAK…ENYSGYELTK (144 aa). Disordered stretches follow at residues 67 to 103 and 133 to 154; these read NNNNNNQNNQDDDNNDDDSNRNTNANSANNIPLAAPA and QLQDQQQQGRGRGGQGQYDAAA. The segment covering 87-103 has biased composition (low complexity); that stretch reads RNTNANSANNIPLAAPA. Residue asparagine 174 is glycosylated (N-linked (GlcNAc...) asparagine).

Expressed in endocrine cells of the larval midgut (at protein level). In the brain, expressed in the optic lobes, lateral protocerebrum, subesophageal ganglion, and intermediate and superior medial protocerebrum (at protein level). Expressed in DN1a neurons but not in other clock neurons and expression follows a rhythmic pattern controlled by the circadian clock (at protein level). In the posterior midgut, expressed in enteroendocrine cells (at protein level). Low levels in larval brain with higher levels in larval and adult gut and adult brain.

The protein localises to the secreted. In terms of biological role, neuropeptide ligand for the CCHamide-1 receptor CCHa1-R. Neuromessenger mediating signaling between neuronal cells of the circadian clock network involved in regulation of sleep latency (the time required to fall asleep), amount of sleep and depth of sleep (arousability). Together with PDF, involved in regulating intensity and periodicity of daytime activity. In subsets of clock neurons modulates the rhythmic expression of PDP1 and PDF, and together with PDF modulates the rhythmic expression of circadian protein PER/period, but not TIM/timeless. Mediates signaling from DN1a (anterior dorsal neurons 1) clock neurons to s-LNv (small ventral lateral neurons) clock neurons through CCHa1-R, contributing to regulation of activity rhythms by the circadian clock, particularly in the morning. May be involved in signaling between clock neurons and non-clock neurons, such as the fan-shaped body, involved in sleep homeostasis. In response to a high protein diet mediates hormonal signaling between the gut and a CCHa1-R expressing subset of dopaminergic cells in the protocerebral anterior medial (PAM) cluster of the brain. This suppresses arousability by mechano-sensory stimulation (but not thermal stimulation) but is not involved in regulation of sleep patterns. This chain is Neuropeptide CCHamide-1, found in Drosophila melanogaster (Fruit fly).